The primary structure comprises 410 residues: Formyl-CoA:oxalate CoA-transferase (410 aa).

CoA contacts are provided by residues 18–19, 72–75, 96–98, R104, and 136–139; these read QS, LNTK, NFG, and KAYE. The Nucleophile role is filled by D168. The segment at 221–245 is disordered; it reads PLAEYPNEDFGDEVPRSGNASGGGQ. 243–245 contributes to the substrate binding site; the sequence is GGQ.

It belongs to the CoA-transferase III family. Frc subfamily. Homodimer.

It carries out the reaction formyl-CoA + oxalate = oxalyl-CoA + formate. The protein operates within metabolic intermediate degradation; oxalate degradation; CO(2) and formate from oxalate: step 1/2. Its function is as follows. Involved in the catabolism of oxalate and in the adapatation to low pH via the induction of the oxalate-dependent acid tolerance response (ATR). Catalyzes the transfer of the CoA moiety from formyl-CoA to oxalate. This is Formyl-CoA:oxalate CoA-transferase from Streptomyces coelicolor (strain ATCC BAA-471 / A3(2) / M145).